Consider the following 198-residue polypeptide: Ribonuclease HII (198 aa).

One can recognise an RNase H type-2 domain in the interval 14–198; that stretch reads GVIAGVDEVG…KNFAPISRAL (185 aa). A divalent metal cation contacts are provided by D20, E21, and D112.

This sequence belongs to the RNase HII family. It depends on Mn(2+) as a cofactor. Mg(2+) serves as cofactor.

It is found in the cytoplasm. It catalyses the reaction Endonucleolytic cleavage to 5'-phosphomonoester.. Functionally, endonuclease that specifically degrades the RNA of RNA-DNA hybrids. In Wolbachia pipientis wMel, this protein is Ribonuclease HII.